The chain runs to 463 residues: Quinolone resistance protein NorB (463 aa).

14 helical membrane-spanning segments follow: residues 17–37 (IGIV…VNVV), 53–73 (IAVS…GGLA), 86–106 (IILN…LLLI), 107–127 (IGRL…LSII), 142–162 (YWSI…GAVA), 165–185 (LGWR…LFLI), 201–221 (FDIK…ILIT), 230–250 (SLLF…FIVL), 273–293 (TASN…NTFV), 299–319 (YSSL…LIMI), 334–354 (PMLI…LTFL), 357–377 (ILYV…LGIY), 403–423 (MASA…YAIV), and 435–455 (IALW…LLLV).

Belongs to the major facilitator superfamily. TCR/Tet family.

It localises to the cell membrane. Functionally, multidrug efflux pump that acts independently of NorA and is one of the factors that confers resistance against diverse quinolones and chemical compounds. In Staphylococcus aureus (strain MRSA252), this protein is Quinolone resistance protein NorB (norB).